The sequence spans 162 residues: Tegument protein BLRF2 (162 aa).

Residues 12–43 (VKAVDMSMEDMAARLARLESENKALKQQVLRG) are a coiled coil. The segment at 118–162 (SMLGAKGQPSPGEGTRPRESNDPNATRRARSRSRGREAKKVQISD) is disordered. Over residues 151–162 (RGREAKKVQISD) the composition is skewed to basic and acidic residues.

The protein belongs to the herpesviridae BLRF2 family. As to quaternary structure, homooligomer; homooligomerizes and binds double-stranded DNA (dsDNA) cooperatively. Interacts with host CGAS.

It localises to the virion tegument. The protein localises to the host cytoplasm. In terms of biological role, plays a role in the inhibition of host innate immune system by targeting the CGAS enzymatic activity which is the principal cytosolic DNA sensor that detects invading viral DNA. Acts by inhibiting CGAS-DNA phase separation: directly binds double-stranded DNA (dsDNA) in a length dependent but sequence independent manner and is able to form DNA-induced phase separation in infected cells. DNA phase separation of ORF52 mediates disruption of liquid-like droplets in which CGAS is activated, thereby preventing CGAS activity. This chain is Tegument protein BLRF2, found in Homo sapiens (Human).